A 1184-amino-acid polypeptide reads, in one-letter code: C5a peptidase (1184 aa).

An N-terminal signal peptide occupies residues 1–31 (MRKKQKLPFDKLAIALMSTSILLNAQSDIKA). Composition is skewed to polar residues over residues 33 to 52 (TVTE…QPTA) and 89 to 100 (AKTTDTPATSKA). Residues 33–117 (TVTEDTPATE…PSQVKTLQEK (85 aa)) form a disordered region. The Peptidase S8 domain occupies 99 to 581 (KATIRDLNDP…AGAVDAKKAS (483 aa)). Catalysis depends on charge relay system residues D130, H193, and S512. Basic and acidic residues-rich tracts occupy residues 1029–1054 (EGHS…KPEQ), 1061–1071 (PDKKPETKPEQ), 1078–1088 (PDKKPEAKPEQ), and 1095–1107 (PDKK…EKDS). A disordered region spans residues 1029 to 1150 (EGHSNKPEQD…RDQLPTTNDK (122 aa)). 4 repeat units span residues 1034-1067 (KPEQ…KPET), 1068-1084 (KPEQ…KPEA), 1085-1101 (KPEQ…KPET), and 1102-1118 (KPEK…TPQK). Residues 1034–1118 (KPEQDGSDQV…GQTPGKTPQK (85 aa)) are 4 X 17 AA tandem repeats. A compositionally biased stretch (polar residues) spans 1109 to 1123 (GQTPGKTPQKGQPSR). The short motif at 1144–1148 (LPTTN) is the LPXTG sorting signal element. Residue T1147 is modified to Pentaglycyl murein peptidoglycan amidated threonine. Residues 1148-1184 (NDKDTNRLHLLKLVMTTFFFGLVAHIFKTKRQKETKK) constitute a propeptide, removed by sortase.

The protein belongs to the peptidase S8 family. In terms of processing, cleaved by SpeB protease; leading to its degradation. Degradation by SpeB is probably strictly regulated to preserve integrity of C5a peptidase.

The protein localises to the secreted. It is found in the cell wall. The enzyme catalyses The primary cleavage site is at 67-His-|-Lys-68 in human C5a with a minor secondary cleavage site at 58-Ala-|-Ser-59.. Functionally, this virulence factor of S.pyogenes specifically cleaves the human serum chemotaxin C5a at '68-Lys-|-Asp-69' bond near its C-terminus, destroying its ability to serve as a chemoattractant. The polypeptide is C5a peptidase (scpA) (Streptococcus pyogenes serotype M6 (strain ATCC BAA-946 / MGAS10394)).